The sequence spans 544 residues: Membrane protein insertase YidC (544 aa).

Residues 6-26 (NLLLIALLFVTFMLWQAWETD) form a helical membrane-spanning segment. The disordered stretch occupies residues 112–132 (SGLTGKNGPDNPANGPRPLFT). 4 consecutive transmembrane segments (helical) span residues 343-363 (KFLH…TFIV), 418-438 (LGGC…YYML), 456-476 (LSAQ…MFFI), and 497-517 (PVIF…YYIV).

This sequence belongs to the OXA1/ALB3/YidC family. Type 1 subfamily. In terms of assembly, interacts with the Sec translocase complex via SecD. Specifically interacts with transmembrane segments of nascent integral membrane proteins during membrane integration.

The protein localises to the cell inner membrane. In terms of biological role, required for the insertion and/or proper folding and/or complex formation of integral membrane proteins into the membrane. Involved in integration of membrane proteins that insert both dependently and independently of the Sec translocase complex, as well as at least some lipoproteins. Aids folding of multispanning membrane proteins. The polypeptide is Membrane protein insertase YidC (Pectobacterium carotovorum subsp. carotovorum (strain PC1)).